The following is a 439-amino-acid chain: MSKLYLMSLGCNKNLVDSEIMLGRLSAYELCDEPSKADVIIVNTCGFIDSAKKESINAILDLHEQRKKDSLLVVTGCLMQRYREELMKELPEVDLFTGVGDYERVDEMILKKTNLFSNSTYLQSENSKRIITGSNSHAFIKIAEGCNQKCSFCAIPSFKGKLKSREISSIIAELKDLVARGYKDFSFIAQDTSSYLFDKGEKDGLIRLIDEVEKIKGIRAARILYLYPTSASEALIKRIIASEIFVNYFDMPLQHISDNMLKIMKRGANSTRLKEMLNLMKSAPNSFLRTGFIVGHPGESEADFEELCEFVKDFGFDRVSVFAYSKEEDTAAFDMEQVSFKVINKRLKIIEKIVNEVIEKSFEKEVGQKRLVVCTGESSEGEFFIAAKDLRWDREIDGEILINESECGNLEMGQIYECEILQNLDKKLLAKALRKVDAN.

One can recognise an MTTase N-terminal domain in the interval 2 to 114 (SKLYLMSLGC…VDEMILKKTN (113 aa)). [4Fe-4S] cluster contacts are provided by C11, C45, C77, C146, C150, and C153. The Radical SAM core domain maps to 132 to 363 (TGSNSHAFIK…VNEVIEKSFE (232 aa)).

The protein belongs to the methylthiotransferase family. RimO subfamily. [4Fe-4S] cluster serves as cofactor.

The protein resides in the cytoplasm. The enzyme catalyses L-aspartate(89)-[ribosomal protein uS12]-hydrogen + (sulfur carrier)-SH + AH2 + 2 S-adenosyl-L-methionine = 3-methylsulfanyl-L-aspartate(89)-[ribosomal protein uS12]-hydrogen + (sulfur carrier)-H + 5'-deoxyadenosine + L-methionine + A + S-adenosyl-L-homocysteine + 2 H(+). Its function is as follows. Catalyzes the methylthiolation of an aspartic acid residue of ribosomal protein uS12. The chain is Ribosomal protein uS12 methylthiotransferase RimO from Campylobacter jejuni (strain RM1221).